A 544-amino-acid polypeptide reads, in one-letter code: CRISPR-associated endodeoxyribonuclease Cas12f2 (544 aa).

Residues methionine 1–valine 195 form a recognition domain (REC) region. A wedge domain (WED) region spans residues histidine 196–valine 326. Residues glutamate 327–glycine 334 are linker. Positions cysteine 335–glutamine 485 are ruvC-I. Active-site residues include aspartate 339 and glutamate 430. Residues threonine 486–asparagine 520 are target nucleic acid-binding (TNB). Zn(2+)-binding residues include cysteine 487, cysteine 490, cysteine 507, and cysteine 512. A ruvC-II region spans residues alanine 521 to threonine 541. Residue aspartate 522 is part of the active site.

Belongs to the CRISPR-associated endonuclease Cas12f family. An asymmetric homodimer. Guide RNA is probably required for dimerization. Mg(2+) serves as cofactor. Requires Zn(2+) as cofactor.

Functionally, CRISPR (clustered regularly interspaced short palindromic repeat), is an adaptive immune system that provides protection against mobile genetic elements (viruses, transposable elements and conjugative plasmids). CRISPR clusters contain sequences complementary to antecedent mobile elements and target invading nucleic acids. CRISPR clusters are transcribed and processed into CRISPR RNA (crRNA), which requires a trans-encoded small RNA (tracrRNA), but not this protein (in vitro). Recognizes a short motif in the CRISPR repeat sequences (the 5' PAM or protospacer adjacent motif, TTAT in this organism) to help distinguish self versus nonself, as targets within the CRISPR locus do not have PAMs. Upon expression in E.coli of this protein, a mini CRISPR array and the probable tracrRNA, has dsDNA endonuclease activity. DNA cleavage is centered around positions 21 base pairs 3' of PAM. The mini system does not protect E.coli against transformation by foreign plasmids. The polypeptide is CRISPR-associated endodeoxyribonuclease Cas12f2 (Micrarchaeota archaeon (strain CG1_02_47_40)).